A 143-amino-acid polypeptide reads, in one-letter code: Large ribosomal subunit protein uL11 (143 aa).

The protein belongs to the universal ribosomal protein uL11 family. In terms of assembly, part of the ribosomal stalk of the 50S ribosomal subunit. Interacts with L10 and the large rRNA to form the base of the stalk. L10 forms an elongated spine to which L12 dimers bind in a sequential fashion forming a multimeric L10(L12)X complex. Post-translationally, one or more lysine residues are methylated.

Functionally, forms part of the ribosomal stalk which helps the ribosome interact with GTP-bound translation factors. This is Large ribosomal subunit protein uL11 from Janthinobacterium sp. (strain Marseille) (Minibacterium massiliensis).